We begin with the raw amino-acid sequence, 57 residues long: DNA-directed RNA polymerase subunit Rpo6 (57 aa).

This sequence belongs to the archaeal Rpo6/eukaryotic RPB6 RNA polymerase subunit family. As to quaternary structure, part of the RNA polymerase complex.

The protein localises to the cytoplasm. It carries out the reaction RNA(n) + a ribonucleoside 5'-triphosphate = RNA(n+1) + diphosphate. In terms of biological role, DNA-dependent RNA polymerase (RNAP) catalyzes the transcription of DNA into RNA using the four ribonucleoside triphosphates as substrates. The sequence is that of DNA-directed RNA polymerase subunit Rpo6 from Thermococcus onnurineus (strain NA1).